A 1058-amino-acid chain; its full sequence is Gem-associated protein 4 (1058 aa).

Methionine 1 is modified (N-acetylmethionine). Threonine 84 bears the Phosphothreonine mark. Phosphoserine occurs at positions 86 and 205. The tract at residues 714–735 (LPKEKRCLSLDRKDLAIHILEL) is leucine-zipper.

In terms of assembly, part of the core SMN complex that contains SMN1, GEMIN2/SIP1, DDX20/GEMIN3, GEMIN4, GEMIN5, GEMIN6, GEMIN7, GEMIN8 and STRAP/UNRIP. Part of the SMN-Sm complex that contains SMN1, GEMIN2/SIP1, DDX20/GEMIN3, GEMIN4, GEMIN5, GEMIN6, GEMIN7, GEMIN8, STRAP/UNRIP and the Sm proteins SNRPB, SNRPD1, SNRPD2, SNRPD3, SNRPE, SNRPF and SNRPG. Interacts with GEMIN3; the interaction is direct. Interacts with GEMIN5. Interacts with GEMIN8; the interaction is direct. Interacts with several snRNP SM core proteins, including SNRPB, SNRPD1, SNRPD2, SNRPD3 and SNRPE. Interacts with PPP4R2.

It localises to the cytoplasm. The protein resides in the nucleus. It is found in the nucleolus. The protein localises to the gem. In terms of biological role, the SMN complex catalyzes the assembly of small nuclear ribonucleoproteins (snRNPs), the building blocks of the spliceosome, and thereby plays an important role in the splicing of cellular pre-mRNAs. Most spliceosomal snRNPs contain a common set of Sm proteins SNRPB, SNRPD1, SNRPD2, SNRPD3, SNRPE, SNRPF and SNRPG that assemble in a heptameric protein ring on the Sm site of the small nuclear RNA to form the core snRNP (Sm core). In the cytosol, the Sm proteins SNRPD1, SNRPD2, SNRPE, SNRPF and SNRPG are trapped in an inactive 6S pICln-Sm complex by the chaperone CLNS1A that controls the assembly of the core snRNP. To assemble core snRNPs, the SMN complex accepts the trapped 5Sm proteins from CLNS1A forming an intermediate. Binding of snRNA inside 5Sm triggers eviction of the SMN complex, thereby allowing binding of SNRPD3 and SNRPB to complete assembly of the core snRNP. The sequence is that of Gem-associated protein 4 (GEMIN4) from Homo sapiens (Human).